Consider the following 507-residue polypeptide: 2,3-bisphosphoglycerate-independent phosphoglycerate mutase (507 aa).

Asp-13 and Ser-63 together coordinate Mn(2+). Ser-63 serves as the catalytic Phosphoserine intermediate. Substrate is bound by residues His-124, 153 to 154 (RD), Arg-183, Arg-189, 254 to 257 (RADR), and Lys-330. Residues Asp-396, His-400, Asp-437, His-438, and His-456 each coordinate Mn(2+).

It belongs to the BPG-independent phosphoglycerate mutase family. As to quaternary structure, monomer. It depends on Mn(2+) as a cofactor.

It carries out the reaction (2R)-2-phosphoglycerate = (2R)-3-phosphoglycerate. The protein operates within carbohydrate degradation; glycolysis; pyruvate from D-glyceraldehyde 3-phosphate: step 3/5. In terms of biological role, catalyzes the interconversion of 2-phosphoglycerate and 3-phosphoglycerate. The polypeptide is 2,3-bisphosphoglycerate-independent phosphoglycerate mutase (Paracoccus denitrificans (strain Pd 1222)).